The primary structure comprises 77 residues: UPF0291 protein YnzC (77 aa).

Positions 56–77 (DPEGNDVTPEKLKREQRNNKLH) are disordered. The span at 63–77 (TPEKLKREQRNNKLH) shows a compositional bias: basic and acidic residues.

The protein belongs to the UPF0291 family.

Its subcellular location is the cytoplasm. This is UPF0291 protein YnzC (ynzC) from Bacillus subtilis (strain 168).